The chain runs to 224 residues: 7-cyano-7-deazaguanine synthase (224 aa).

Residue 8–18 (CSGGLDSTVAA) participates in ATP binding. Zn(2+) is bound by residues Cys190, Cys198, Cys201, and Cys204.

This sequence belongs to the QueC family. Zn(2+) is required as a cofactor.

It catalyses the reaction 7-carboxy-7-deazaguanine + NH4(+) + ATP = 7-cyano-7-deazaguanine + ADP + phosphate + H2O + H(+). Its pathway is purine metabolism; 7-cyano-7-deazaguanine biosynthesis. Its function is as follows. Catalyzes the ATP-dependent conversion of 7-carboxy-7-deazaguanine (CDG) to 7-cyano-7-deazaguanine (preQ(0)). The chain is 7-cyano-7-deazaguanine synthase from Methanothrix thermoacetophila (strain DSM 6194 / JCM 14653 / NBRC 101360 / PT) (Methanosaeta thermophila).